A 123-amino-acid polypeptide reads, in one-letter code: Putative iron-sulfur cluster insertion protein ErpA (123 aa).

Iron-sulfur cluster is bound by residues Cys51, Cys115, and Cys117.

The protein belongs to the HesB/IscA family. In terms of assembly, homodimer. Iron-sulfur cluster serves as cofactor.

In terms of biological role, required for insertion of 4Fe-4S clusters. The protein is Putative iron-sulfur cluster insertion protein ErpA of Bordetella bronchiseptica (strain ATCC BAA-588 / NCTC 13252 / RB50) (Alcaligenes bronchisepticus).